A 92-amino-acid polypeptide reads, in one-letter code: Ribonuclease P protein component 1 (92 aa).

This sequence belongs to the eukaryotic/archaeal RNase P protein component 1 family. As to quaternary structure, consists of a catalytic RNA component and at least 4-5 protein subunits.

The protein resides in the cytoplasm. The catalysed reaction is Endonucleolytic cleavage of RNA, removing 5'-extranucleotides from tRNA precursor.. Part of ribonuclease P, a protein complex that generates mature tRNA molecules by cleaving their 5'-ends. The sequence is that of Ribonuclease P protein component 1 from Desulfurococcus amylolyticus (strain DSM 18924 / JCM 16383 / VKM B-2413 / 1221n) (Desulfurococcus kamchatkensis).